We begin with the raw amino-acid sequence, 134 residues long: MVDARHATGQHGEDEAAALLQRTGHRIIARNWRHGGLELDIICETGDTIVFVEVKTRAAHGLTSPTDALTHQKRHRLIRAARAWLAAADAWDRACRFDLVCVTQRGATCTLEHITDAFDLTETLGGGDTSWQPW.

Belongs to the UPF0102 family.

The sequence is that of UPF0102 protein Dvul_2148 from Nitratidesulfovibrio vulgaris (strain DP4) (Desulfovibrio vulgaris).